We begin with the raw amino-acid sequence, 990 residues long: Activator of stress genes protein 1 (990 aa).

The tract at residues M1–R88 is disordered. The segment covering T9–E23 has biased composition (polar residues). Positions S24–N61 are enriched in low complexity. Residues C95 to C121 constitute a DNA-binding region (zn(2)-C6 fungal-type). Low complexity-rich tracts occupy residues N160–V179, S282–S293, and T773–S793. 4 disordered regions span residues N160–E192, Q255–R295, R764–A800, and S915–A944.

The protein belongs to the ASG1 family.

The protein localises to the nucleus. Functionally, transcription factor necessary to sustain growth on non-fermentative carbon sources such as sodium acetate, acetic acid, or ethanol. Plays a role in hyphal formation. The chain is Activator of stress genes protein 1 (ASG1) from Candida albicans (strain SC5314 / ATCC MYA-2876) (Yeast).